The chain runs to 427 residues: Phosphatidylserine decarboxylase proenzyme 1, mitochondrial (427 aa).

The N-terminal 77 residues, 1-77, are a transit peptide targeting the mitochondrion; that stretch reads MRSYLRFSDR…RRFVYKLDQA (77 aa). Over 78–88 the chain is Mitochondrial matrix; it reads VTAALGPNGRY. Residues 89–107 form a helical membrane-spanning segment; the sequence is IAMVGMTASAVLLTFHYKF. The Mitochondrial intermembrane portion of the chain corresponds to 108–427; the sequence is REVIAATDNV…TEDERLFAFY (320 aa). Active-site charge relay system; for autoendoproteolytic cleavage activity residues include Asp-210, His-268, and Ser-379. Ser-379 acts as the Schiff-base intermediate with substrate; via pyruvic acid; for decarboxylase activity in catalysis. Position 379 is a pyruvic acid (Ser); by autocatalysis (Ser-379).

The protein belongs to the phosphatidylserine decarboxylase family. PSD-B subfamily. Eukaryotic type I sub-subfamily. As to quaternary structure, heterodimer of a large membrane-associated beta subunit and a small pyruvoyl-containing alpha subunit. The cofactor is pyruvate. Is synthesized initially as an inactive proenzyme. Formation of the active enzyme involves a self-maturation process in which the active site pyruvoyl group is generated from an internal serine residue via an autocatalytic post-translational modification. Two non-identical subunits are generated from the proenzyme in this reaction, and the pyruvate is formed at the N-terminus of the alpha chain, which is derived from the carboxyl end of the proenzyme. The autoendoproteolytic cleavage occurs by a canonical serine protease mechanism, in which the side chain hydroxyl group of the serine supplies its oxygen atom to form the C-terminus of the beta chain, while the remainder of the serine residue undergoes an oxidative deamination to produce ammonia and the pyruvoyl prosthetic group on the alpha chain. During this reaction, the Ser that is part of the protease active site of the proenzyme becomes the pyruvoyl prosthetic group, which constitutes an essential element of the active site of the mature decarboxylase.

The protein resides in the mitochondrion. It is found in the mitochondrion inner membrane. It catalyses the reaction a 1,2-diacyl-sn-glycero-3-phospho-L-serine + H(+) = a 1,2-diacyl-sn-glycero-3-phosphoethanolamine + CO2. The protein operates within phospholipid metabolism; phosphatidylethanolamine biosynthesis; phosphatidylethanolamine from CDP-diacylglycerol: step 2/2. Catalyzes the formation of phosphatidylethanolamine (PtdEtn) from phosphatidylserine (PtdSer). Plays a central role in phospholipid metabolism and in the interorganelle trafficking of phosphatidylserine. This Toxoplasma gondii (strain ATCC 50853 / GT1) protein is Phosphatidylserine decarboxylase proenzyme 1, mitochondrial.